Here is a 549-residue protein sequence, read N- to C-terminus: Chaperonin GroEL 2 (549 aa).

Residues 30–33 (TLGP), Lys-51, 87–91 (DGTTT), Gly-415, 479–481 (NAA), and Asp-495 contribute to the ATP site.

This sequence belongs to the chaperonin (HSP60) family. In terms of assembly, forms a cylinder of 14 subunits composed of two heptameric rings stacked back-to-back. Interacts with the co-chaperonin GroES.

It localises to the cytoplasm. The enzyme catalyses ATP + H2O + a folded polypeptide = ADP + phosphate + an unfolded polypeptide.. Functionally, together with its co-chaperonin GroES, plays an essential role in assisting protein folding. The GroEL-GroES system forms a nano-cage that allows encapsulation of the non-native substrate proteins and provides a physical environment optimized to promote and accelerate protein folding. The polypeptide is Chaperonin GroEL 2 (Polaromonas naphthalenivorans (strain CJ2)).